The sequence spans 400 residues: Acetate kinase (400 aa).

Residue asparagine 10 participates in Mg(2+) binding. Position 17 (lysine 17) interacts with ATP. Substrate is bound at residue arginine 91. The Proton donor/acceptor role is filled by aspartate 150. ATP is bound by residues 210-214 (HLGSG), 285-287 (DCR), and 333-337 (GIGEN). Mg(2+) is bound at residue glutamate 387.

The protein belongs to the acetokinase family. As to quaternary structure, homodimer. Mg(2+) is required as a cofactor. Requires Mn(2+) as cofactor.

Its subcellular location is the cytoplasm. The enzyme catalyses acetate + ATP = acetyl phosphate + ADP. The protein operates within metabolic intermediate biosynthesis; acetyl-CoA biosynthesis; acetyl-CoA from acetate: step 1/2. Functionally, catalyzes the formation of acetyl phosphate from acetate and ATP. Can also catalyze the reverse reaction. The polypeptide is Acetate kinase (Baumannia cicadellinicola subsp. Homalodisca coagulata).